A 463-amino-acid polypeptide reads, in one-letter code: Retinoic acid receptor RXR-gamma (463 aa).

Residues 1 to 138 form a modulating region; the sequence is MYGNYSHFMK…TSPGSLVKHI (138 aa). Residues 18 to 53 are disordered; the sequence is SPGHTGSTSMSPSAALSTGKPMDSHPSYTDTPVSAP. Positions 21-33 are enriched in polar residues; sequence HTGSTSMSPSAAL. Residues 136-211 constitute a DNA-binding region (nuclear receptor); that stretch reads KHICAICGDR…MGMKREAVQE (76 aa). 2 NR C4-type zinc fingers span residues 139-159 and 175-199; these read CAICGDRSSGKHYGVYSCEGC and CRDNKDCLIDKRQRNRCQYCRYQKC. The interval 205–230 is hinge; that stretch reads KREAVQEERQRSRERAESEAECATSG. The NR LBD domain occupies 231-459; it reads HEDMPVERIL…TFLMEMLETP (229 aa).

Belongs to the nuclear hormone receptor family. NR2 subfamily. Homodimer. Heterodimer with a RAR molecule. Binds DNA preferentially as a RAR/RXR heterodimer. Interacts with RARA. Acetylated by EP300. Expressed in aortic endothelial cells (at protein level).

It localises to the nucleus. Its subcellular location is the cytoplasm. Receptor for retinoic acid. Retinoic acid receptors bind as heterodimers to their target response elements in response to their ligands, all-trans or 9-cis retinoic acid, and regulate gene expression in various biological processes. The RAR/RXR heterodimers bind to the retinoic acid response elements (RARE) composed of tandem 5'-AGGTCA-3' sites known as DR1-DR5. The high affinity ligand for RXRs is 9-cis retinoic acid. The sequence is that of Retinoic acid receptor RXR-gamma (RXRG) from Homo sapiens (Human).